Consider the following 355-residue polypeptide: C-X-C chemokine receptor type 1 (355 aa).

Over 1 to 40 the chain is Extracellular; that stretch reads MEVNVWNMTDLWTWFEDEFANATGMPPVEKDYSPCLVVTQ. 2 N-linked (GlcNAc...) asparagine glycosylation sites follow: N7 and N21. The helical transmembrane segment at 41-67 threads the bilayer; sequence TLNKYVVVVIYALVFLLSLLGNSLVML. Over 68-73 the chain is Cytoplasmic; the sequence is VILYSR. The chain crosses the membrane as a helical span at residues 74 to 92; the sequence is SNRSVTDVYLLNLAMADLL. Residues 93-114 are Extracellular-facing; it reads FALTMPIWAVSKEKGWIFGTPL. The chain crosses the membrane as a helical span at residues 115-138; that stretch reads CKVVSLVKEVNFYSGILLLACISV. Residues C115 and C192 are joined by a disulfide bond. Topologically, residues 139–159 are cytoplasmic; the sequence is DRYLAIVHATRTLTQKRHLVK. A helical membrane pass occupies residues 160 to 184; it reads FICLGIWALSLILSLPFFLFRQVFS. Over 185-204 the chain is Extracellular; that stretch reads PNNSSPVCYEDLGHNTAKWR. Residues 205–232 form a helical membrane-spanning segment; the sequence is MVLRILPHTFGFILPLLVMLFCYGFTLR. Residues 233–247 are Cytoplasmic-facing; it reads TLFQAHMGQKHRAMR. The chain crosses the membrane as a helical span at residues 248–270; sequence VIFAVVLIFLLCWLPYNLVLLAD. Topologically, residues 271–290 are extracellular; the sequence is TLMRTHVIQETCQRRNDIDR. Residues 291-313 form a helical membrane-spanning segment; it reads ALDATEILGFLHSCLNPIIYAFI. Over 314–355 the chain is Cytoplasmic; the sequence is GQNFRNGFLKMLAARGLISKEFLTRHRVTSYTSSSTNVPSNL.

Belongs to the G-protein coupled receptor 1 family. In terms of assembly, interacts with IL8. Interacts with GNAI2. Neutrophils.

It localises to the cell membrane. Functionally, receptor to interleukin-8, which is a powerful neutrophils chemotactic factor. Binding of IL-8 to the receptor causes activation of neutrophils. This response is mediated via a G-protein that activates a phosphatidylinositol-calcium second messenger system. This Oryctolagus cuniculus (Rabbit) protein is C-X-C chemokine receptor type 1 (CXCR1).